Consider the following 444-residue polypeptide: Glutamyl-tRNA reductase (444 aa).

Residues 41-44 (TCNR), serine 102, 107-109 (ERE), and glutamine 113 contribute to the substrate site. The active-site Nucleophile is the cysteine 42. Position 181 to 186 (181 to 186 (GTGSYA)) interacts with NADP(+).

The protein belongs to the glutamyl-tRNA reductase family. In terms of assembly, homodimer.

The enzyme catalyses (S)-4-amino-5-oxopentanoate + tRNA(Glu) + NADP(+) = L-glutamyl-tRNA(Glu) + NADPH + H(+). It functions in the pathway porphyrin-containing compound metabolism; protoporphyrin-IX biosynthesis; 5-aminolevulinate from L-glutamyl-tRNA(Glu): step 1/2. Catalyzes the NADPH-dependent reduction of glutamyl-tRNA(Glu) to glutamate 1-semialdehyde (GSA). The chain is Glutamyl-tRNA reductase from Cutibacterium acnes (strain DSM 16379 / KPA171202) (Propionibacterium acnes).